A 583-amino-acid polypeptide reads, in one-letter code: Malonate--CoA ligase ACSF3, mitochondrial (583 aa).

A mitochondrion-targeting transit peptide spans 1–27 (MPPHLALPFRRLFWSLASSQLIPRRHR). Residues 202-210 (TSGTTGRPK), aspartate 455, arginine 469, and lysine 561 contribute to the ATP site.

The protein belongs to the ATP-dependent AMP-binding enzyme family.

The protein resides in the mitochondrion. The enzyme catalyses tetracosanoate + ATP + CoA = tetracosanoyl-CoA + AMP + diphosphate. It carries out the reaction malonate + ATP + CoA = malonyl-CoA + AMP + diphosphate. Catalyzes the initial reaction in intramitochondrial fatty acid synthesis, by activating malonate and methylmalonate, but not acetate, into their respective CoA thioester. May have some preference toward very-long-chain substrates. This Mus musculus (Mouse) protein is Malonate--CoA ligase ACSF3, mitochondrial.